The primary structure comprises 223 residues: 2-C-methyl-D-erythritol 4-phosphate cytidylyltransferase (223 aa).

The protein belongs to the IspD/TarI cytidylyltransferase family. IspD subfamily.

It carries out the reaction 2-C-methyl-D-erythritol 4-phosphate + CTP + H(+) = 4-CDP-2-C-methyl-D-erythritol + diphosphate. The protein operates within isoprenoid biosynthesis; isopentenyl diphosphate biosynthesis via DXP pathway; isopentenyl diphosphate from 1-deoxy-D-xylulose 5-phosphate: step 2/6. In terms of biological role, catalyzes the formation of 4-diphosphocytidyl-2-C-methyl-D-erythritol from CTP and 2-C-methyl-D-erythritol 4-phosphate (MEP). This chain is 2-C-methyl-D-erythritol 4-phosphate cytidylyltransferase, found in Prochlorococcus marinus (strain MIT 9301).